A 246-amino-acid chain; its full sequence is Eukaryotic translation initiation factor 6 (246 aa).

The protein belongs to the eIF-6 family. Monomer. Associates with the 60S ribosomal subunit.

Its subcellular location is the cytoplasm. The protein resides in the nucleus. The protein localises to the nucleolus. Functionally, binds to the 60S ribosomal subunit and prevents its association with the 40S ribosomal subunit to form the 80S initiation complex in the cytoplasm. May also be involved in ribosome biogenesis. Involved in miRNA-mediated gene silencing. This is Eukaryotic translation initiation factor 6 from Caenorhabditis elegans.